The following is a 311-amino-acid chain: NAD kinase (311 aa).

The active-site Proton acceptor is the D88. NAD(+) is bound by residues 88–89 (DG), 162–163 (NE), R190, D192, V200, and 203–208 (TAHNLS).

This sequence belongs to the NAD kinase family. A divalent metal cation serves as cofactor.

Its subcellular location is the cytoplasm. It carries out the reaction NAD(+) + ATP = ADP + NADP(+) + H(+). Involved in the regulation of the intracellular balance of NAD and NADP, and is a key enzyme in the biosynthesis of NADP. Catalyzes specifically the phosphorylation on 2'-hydroxyl of the adenosine moiety of NAD to yield NADP. In Rhodopirellula baltica (strain DSM 10527 / NCIMB 13988 / SH1), this protein is NAD kinase.